An 816-amino-acid polypeptide reads, in one-letter code: H(+)/Cl(-) exchange transporter 5 (816 aa).

The Cytoplasmic portion of the chain corresponds to 1 to 124; that stretch reads MAMWQGAMDN…WALIHSVSDA (124 aa). A run of 2 helical transmembrane segments spans residues 125–162 and 208–231; these read FSGWLLMLLIGLLSGSLAGLIDISAHWMTDLKEGICTG and VNYFMYVLWALLFAFLAVSLVKAF. The Selectivity filter part_1 motif lies at 237–241; sequence GSGIP. S238 is a binding site for chloride. The helical intramembrane region spans 240–247; the sequence is IPEIKTIL. Helical transmembrane passes span 256–275 and 281–300; these read LGKWTLVIKTITLVLAVSSG and EGPLVHVACCCGNILCHCFN. The short motif at 279-283 is the Selectivity filter part_2 element; that stretch reads GKEGP. 2 consecutive intramembrane regions (helical) follow at residues 312-324 and 328-336; these read VLSAAAAAGVSVA and PIGGVLFSL. The next 5 membrane-spanning stretches (helical) occupy residues 348 to 366, 389 to 414, 422 to 442, 498 to 518, and 523 to 542; these read LWRSFFAALVAAFTLRSIN, LVPFIVLGIFGGLWGALFIRTNIAWC, LGKYPVVEVLIVTAITAILAF, MWQLALTLILKIVITIFTFGM, and GLFIPSMAVGAIAGRLLGVG. The Selectivity filter part_3 motif lies at 523–527; sequence GLFIP. F525 serves as a coordination point for chloride. Residues 570–584 constitute an intramembrane region (helical); sequence GLYAMVGAAACLGGV. The segment at residues 585 to 587 is an intramembrane region (note=Loop between two helices); sequence TRM. The helical intramembrane region spans 588-599; that stretch reads TVSLVVIMFELT. An intramembrane region (note=Loop between two helices) is located at residues 600 to 604; sequence GGLEY. A helical transmembrane segment spans residues 605–622; sequence IVPLMAAAMTSKWVADAL. The Cytoplasmic portion of the chain corresponds to 623–816; that stretch reads GREGIYDAHI…NQDPESILFN (194 aa). Y628 is a chloride binding site. 2 CBS domains span residues 656-720 and 752-811; these read MKPR…ARKK and ILDL…QDPE. ATP-binding positions include T666, 687–689, and 794–797; these read YSG and TKKD.

This sequence belongs to the chloride channel (TC 2.A.49) family. ClC-5/CLCN5 subfamily. In terms of assembly, interacts with NEDD4 and NEDD4L. In terms of processing, ubiquitinated by NEDD4L in the presence of albumin; which promotes endocytosis and proteasomal degradation. Kidney specific.

Its subcellular location is the golgi apparatus membrane. The protein resides in the endosome membrane. It localises to the cell membrane. It carries out the reaction 2 chloride(in) + H(+)(out) = 2 chloride(out) + H(+)(in). Proton-coupled chloride transporter. Functions as antiport system and exchanges chloride ions against protons. Important for normal acidification of the endosome lumen. May play an important role in renal tubular function. The CLC channel family contains both chloride channels and proton-coupled anion transporters that exchange chloride or another anion for protons. The absence of conserved gating glutamate residues is typical for family members that function as channels. The chain is H(+)/Cl(-) exchange transporter 5 (Clcn5) from Rattus norvegicus (Rat).